Here is a 380-residue protein sequence, read N- to C-terminus: Probable protein phosphatase 2C 2 (380 aa).

One can recognise a PPM-type phosphatase domain in the interval 69–339 (RSGSFADIGP…DNLTVIVICF (271 aa)). Asp-113, Gly-114, Asp-287, and Asp-330 together coordinate Mn(2+).

The protein belongs to the PP2C family. It depends on Mg(2+) as a cofactor. The cofactor is Mn(2+).

The catalysed reaction is O-phospho-L-seryl-[protein] + H2O = L-seryl-[protein] + phosphate. It catalyses the reaction O-phospho-L-threonyl-[protein] + H2O = L-threonyl-[protein] + phosphate. In Oryza sativa subsp. japonica (Rice), this protein is Probable protein phosphatase 2C 2.